Consider the following 292-residue polypeptide: 1D-myo-inositol 2-acetamido-2-deoxy-alpha-D-glucopyranoside deacetylase (292 aa).

His12, Asp15, and His147 together coordinate Zn(2+).

It belongs to the MshB deacetylase family. Zn(2+) is required as a cofactor.

The catalysed reaction is 1D-myo-inositol 2-acetamido-2-deoxy-alpha-D-glucopyranoside + H2O = 1D-myo-inositol 2-amino-2-deoxy-alpha-D-glucopyranoside + acetate. Functionally, catalyzes the deacetylation of 1D-myo-inositol 2-acetamido-2-deoxy-alpha-D-glucopyranoside (GlcNAc-Ins) in the mycothiol biosynthesis pathway. The chain is 1D-myo-inositol 2-acetamido-2-deoxy-alpha-D-glucopyranoside deacetylase from Rhodococcus jostii (strain RHA1).